Reading from the N-terminus, the 362-residue chain is PDZ and LIM domain protein 3 (362 aa).

The 84-residue stretch at 1-84 folds into the PDZ domain; sequence MPQNVVLPGP…QLCLKIDRAE (84 aa). Phosphoserine occurs at positions 18, 92, and 263. Residues 261 to 282 are disordered; it reads DGSDDRPAGTRSVRPVTKVHGG. In terms of domain architecture, LIM zinc-binding spans 290 to 349; sequence PLCDKCGSGIVGAVVKARDKYRHPECFVCADCNLNLKQKGYFFVEGELYCEMHARARTRP.

As to quaternary structure, interacts with ACTN2. Forms a heterodimer with PDLIM4 (via LIM domain). In terms of tissue distribution, highly expressed in skeletal muscle and at low levels in the heart.

Its subcellular location is the cytoplasm. It is found in the myofibril. It localises to the sarcomere. The protein localises to the z line. Its function is as follows. May play a role in the organization of actin filament arrays within muscle cells. The chain is PDZ and LIM domain protein 3 (Pdlim3) from Rattus norvegicus (Rat).